Consider the following 597-residue polypeptide: Aspartate--tRNA ligase (597 aa).

Glu-171 lines the L-aspartate pocket. The aspartate stretch occupies residues Gln-195–Lys-198. An L-aspartate-binding site is contributed by Arg-217. Residues Arg-217 to Glu-219 and Gln-226 contribute to the ATP site. His-448 serves as a coordination point for L-aspartate. Glu-482 contacts ATP. Arg-489 serves as a coordination point for L-aspartate. Gly-534–Arg-537 provides a ligand contact to ATP.

The protein belongs to the class-II aminoacyl-tRNA synthetase family. Type 1 subfamily. Homodimer.

The protein resides in the cytoplasm. It carries out the reaction tRNA(Asp) + L-aspartate + ATP = L-aspartyl-tRNA(Asp) + AMP + diphosphate. Functionally, catalyzes the attachment of L-aspartate to tRNA(Asp) in a two-step reaction: L-aspartate is first activated by ATP to form Asp-AMP and then transferred to the acceptor end of tRNA(Asp). In Photobacterium profundum (strain SS9), this protein is Aspartate--tRNA ligase.